The primary structure comprises 285 residues: Hypersensitive-induced response protein 3 (285 aa).

The N-myristoyl glycine moiety is linked to residue G2. 2 coiled-coil regions span residues 113–139 (NLDD…MTAY) and 165–185 (NAAA…KIIQ).

In terms of assembly, self-interacts and forms heteromers. Interacts with NB-LRR class of R proteins before R proteins (e.g. RPS2 or RPM1) are activated by the effectors.

The protein resides in the cell membrane. The protein is Hypersensitive-induced response protein 3 (HIR3) of Arabidopsis thaliana (Mouse-ear cress).